Consider the following 417-residue polypeptide: Envelope glycoprotein D (417 aa).

Residues 1-18 (MQGPTLAVLGALLAVAVS) form the signal peptide. The Virion surface portion of the chain corresponds to 19–360 (LPTPAPRVTV…APATPAAPDA (342 aa)). 2 N-linked (GlcNAc...) asparagine; by host glycosylation sites follow: N41 and N102. 3 disulfides stabilise this stretch: C75–C197, C114–C213, and C126–C135. The interval 259–356 (EESKGYEPPP…HPPPAPATPA (98 aa)) is disordered. A compositionally biased stretch (acidic residues) spans 279-292 (GDDEAREDEGETED). The helical transmembrane segment at 361 to 389 (VPVSVGIGIAAAAIACVAAAAAGAYFVYT) threads the bilayer. The Intravirion segment spans residues 390–417 (RRRGAGPLPRKPKKLPAFGNVNYSALPG).

Belongs to the herpesviridae glycoprotein D family.

The protein localises to the virion membrane. Its function is as follows. Envelope glycoprotein that binds to host cell entry receptors, promoting the virus entry into host cells. May trigger fusion with host membrane, by recruiting the fusion machinery composed of gB and gH/gL. In Bovine herpesvirus 1.1 (strain Cooper) (BoHV-1), this protein is Envelope glycoprotein D (gD).